A 251-amino-acid chain; its full sequence is Squamosa promoter-binding-like protein 4 (251 aa).

Positions 1–15 are enriched in pro residues; the sequence is MDWMPPPKPTSPRSP. The interval 1–64 is disordered; it reads MDWMPPPKPT…RAEEGGGGGG (64 aa). A compositionally biased stretch (low complexity) spans 24–43; the sequence is AAVPGSSSGEVSAAAAAAAA. An SBP-type zinc finger spans residues 65 to 142; it reads EVRCQVEGCG…YDHNARRRKP (78 aa). The Zn(2+) site is built by C68, C73, C90, H93, C109, C112, H116, and C128. Residues 125–141 carry the Bipartite nuclear localization signal motif; that stretch reads KRSCRRRLYDHNARRRK.

As to expression, expressed in stems, leaf sheaths, and young panicles.

It localises to the nucleus. Its function is as follows. Trans-acting factor that binds specifically to the consensus nucleotide sequence 5'-TNCGTACAA-3'. May be involved in panicle development. This chain is Squamosa promoter-binding-like protein 4 (SPL4), found in Oryza sativa subsp. japonica (Rice).